Consider the following 476-residue polypeptide: Aspartate kinase Ask_Ect (476 aa).

One can recognise an ACT domain in the interval 405 to 476; it reads SAIGSDLKVK…ENHGDVIAAA (72 aa).

This sequence belongs to the aspartokinase family. Monomer.

Its subcellular location is the cytoplasm. The enzyme catalyses L-aspartate + ATP = 4-phospho-L-aspartate + ADP. It functions in the pathway amine and polyamine biosynthesis; ectoine biosynthesis. With respect to regulation, allosterically and strongly feedback inhibited by tryptophan. The presence of either 650 mM NaCl or KCl reduces the inhibition by tryptophan. In terms of biological role, involved in the biosynthesis of L-aspartate-beta-semialdehyde, which is an intermediate in the biosynthesis of ectoine, a highly soluble organic osmolyte, called compatible solute. Ectoine is used to avoid excessive water efflux, plasmolysis, molecular crowding of the cytoplasm, and cessation of growth in high salinity environments. Catalyzes the phosphorylation of the beta-carboxyl group of L-aspartate to yield 4-phospho-L-aspartate. In Stutzerimonas stutzeri (strain A1501) (Pseudomonas stutzeri), this protein is Aspartate kinase Ask_Ect (ask).